Here is a 768-residue protein sequence, read N- to C-terminus: Post-transcriptional regulator MKT1 (768 aa).

Belongs to the XPG/RAD2 endonuclease family. In terms of assembly, interacts with PBP1.

It localises to the cytoplasm. The protein resides in the cytosol. Functionally, involved in 3'-UTR mediated RNA regulation. Complexes with PBP1 to promote mRNA interactions with poly(A)-binding protein. The sequence is that of Post-transcriptional regulator MKT1 from Cryptococcus neoformans var. grubii serotype A (strain H99 / ATCC 208821 / CBS 10515 / FGSC 9487) (Filobasidiella neoformans var. grubii).